We begin with the raw amino-acid sequence, 285 residues long: Ubiquinone biosynthesis protein COQ4, mitochondrial (285 aa).

A mitochondrion-targeting transit peptide spans 1 to 11 (MPPAVRQGMRT). Zn(2+) contacts are provided by His166, Asp167, His170, and Glu182.

Belongs to the COQ4 family. As to quaternary structure, component of a multi-subunit COQ enzyme complex, composed of at least COQ3, COQ4, COQ5, COQ6, COQ7 and COQ9. Zn(2+) serves as cofactor.

The protein resides in the mitochondrion inner membrane. The enzyme catalyses a 4-hydroxy-3-methoxy-5-(all-trans-polyprenyl)benzoate + H(+) = a 2-methoxy-6-(all-trans-polyprenyl)phenol + CO2. It participates in cofactor biosynthesis; ubiquinone biosynthesis. Lyase that catalyzes the C1-decarboxylation of 4-hydroxy-3-methoxy-5-(all-trans-polyprenyl)benzoic acid into 2-methoxy-6-(all-trans-polyprenyl)phenol during ubiquinone biosynthesis. The sequence is that of Ubiquinone biosynthesis protein COQ4, mitochondrial from Paracoccidioides lutzii (strain ATCC MYA-826 / Pb01) (Paracoccidioides brasiliensis).